A 489-amino-acid chain; its full sequence is Mitogen-activated protein kinase adapter protein MST50 (489 aa).

Positions 1 to 56 (MSFNTGTAYAESDADDEYERDIHDSSPIDATDAEASPTESDPPSNEHTPTTYGYRS) are disordered. Polar residues predominate over residues 37–54 (PTESDPPSNEHTPTTYGY). The SAM domain maps to 69–132 (WTADECADFI…LRSVYDVKKA (64 aa)). Disordered regions lie at residues 207–285 (PLPH…AAER) and 309–379 (SINI…GSNA). Composition is skewed to polar residues over residues 256–265 (PKATSPTHLQ) and 328–346 (ASRS…STFA). Residues 377–457 (SNASVEIFKS…PMFMLRKTNN (81 aa)) enclose the Ras-associating domain.

In terms of assembly, interacts with MST7 and MST11. Interacts with MCK1, MKK2 and HIK1.

Mitogen-activated protein kinase adapter protein; part of the MST11-MST7-PMK1 MAP kinase (MAPK) cascade that is essential for appressorium formation, penetration and invasive growth. Binds to the MAPKKK MST11 and the MAPKK MST7 to maintain the stability of the MST11-MST7 complex for the phosphorylation of the MAPK PMK1. Is also involved in the MPS1 and OSM1 MAPK pathways, and especially plays a role in the activation of MPS1 in response to cell wall stress. Its function differs in the 3 MAPK pathways. The protein is Mitogen-activated protein kinase adapter protein MST50 of Pyricularia oryzae (strain 70-15 / ATCC MYA-4617 / FGSC 8958) (Rice blast fungus).